Here is a 205-residue protein sequence, read N- to C-terminus: Outer-membrane lipoprotein carrier protein (205 aa).

Positions 1-19 (MKKIIICFIFVFSINISFA) are cleaved as a signal peptide.

Belongs to the LolA family. In terms of assembly, monomer.

Its subcellular location is the periplasm. In terms of biological role, participates in the translocation of lipoproteins from the inner membrane to the outer membrane. Only forms a complex with a lipoprotein if the residue after the N-terminal Cys is not an aspartate (The Asp acts as a targeting signal to indicate that the lipoprotein should stay in the inner membrane). The protein is Outer-membrane lipoprotein carrier protein of Francisella tularensis subsp. novicida (strain U112).